A 534-amino-acid polypeptide reads, in one-letter code: Cytokinin dehydrogenase 5 (534 aa).

A signal peptide spans 1–20 (MAWCLVFMVFLIYCLISTVG). An FAD-binding PCMH-type domain is found at 59–243 (TSAEPLAVFH…TRARIALEPA (185 aa)). Positions 93, 95, and 97 each coordinate FAD. Residue H98 is modified to Pros-8alpha-FAD histidine. FAD-binding residues include S99 and Q103. The N-linked (GlcNAc...) asparagine glycan is linked to N152. The FAD site is built by D167, S172, S178, I182, and I233. Residue N256 is glycosylated (N-linked (GlcNAc...) asparagine). FAD-binding residues include Y484 and Q522.

It belongs to the oxygen-dependent FAD-linked oxidoreductase family. Monomer. FAD serves as cofactor. In terms of tissue distribution, expressed in inflorescence meristems.

It is found in the secreted. The protein resides in the extracellular space. The catalysed reaction is N(6)-dimethylallyladenine + A + H2O = 3-methyl-2-butenal + adenine + AH2. In terms of biological role, catalyzes the oxidation of cytokinins, a family of N(6)-substituted adenine derivatives that are plant hormones, where the substituent is an isopentenyl group. The polypeptide is Cytokinin dehydrogenase 5 (CKX5) (Oryza sativa subsp. japonica (Rice)).